Consider the following 149-residue polypeptide: Large-conductance mechanosensitive channel (149 aa).

The next 3 helical transmembrane spans lie at 10–30 (FALKGNVMDLAVGVIIGGAFA), 41–61 (IMPIVAFIVGGEINFKNMFLI), and 87–107 (GSFITVLINFLILAFIIFMMV).

Belongs to the MscL family. In terms of assembly, homopentamer.

The protein localises to the cell inner membrane. In terms of biological role, channel that opens in response to stretch forces in the membrane lipid bilayer. May participate in the regulation of osmotic pressure changes within the cell. The protein is Large-conductance mechanosensitive channel of Psychrobacter cryohalolentis (strain ATCC BAA-1226 / DSM 17306 / VKM B-2378 / K5).